The sequence spans 1584 residues: Sterile alpha motif domain-containing protein 9-like (1584 aa).

In terms of domain architecture, SAM spans 14–79 (WTKEHVKKWV…RSYNKLNSKS (66 aa)). The disordered stretch occupies residues 76–122 (NSKSPESDNHDPGQLDNSKPSKTEHQKNPKHTKKEEENSMSSNIDYD). Residues 80-112 (PESDNHDPGQLDNSKPSKTEHQKNPKHTKKEEE) are compositionally biased toward basic and acidic residues.

In terms of assembly, interacts with EEA1. Widely expressed in adult and fetal tissues. Expressed in the cerebellum. Variable expression in tumors. Down-regulated in breast cancer.

Its subcellular location is the early endosome. The protein localises to the mitochondrion. May be involved in endosome fusion. Mediates down-regulation of growth factor signaling via internalization of growth factor receptors. This Homo sapiens (Human) protein is Sterile alpha motif domain-containing protein 9-like (SAMD9L).